The primary structure comprises 160 residues: SsrA-binding protein (160 aa).

The protein belongs to the SmpB family.

It localises to the cytoplasm. Its function is as follows. Required for rescue of stalled ribosomes mediated by trans-translation. Binds to transfer-messenger RNA (tmRNA), required for stable association of tmRNA with ribosomes. tmRNA and SmpB together mimic tRNA shape, replacing the anticodon stem-loop with SmpB. tmRNA is encoded by the ssrA gene; the 2 termini fold to resemble tRNA(Ala) and it encodes a 'tag peptide', a short internal open reading frame. During trans-translation Ala-aminoacylated tmRNA acts like a tRNA, entering the A-site of stalled ribosomes, displacing the stalled mRNA. The ribosome then switches to translate the ORF on the tmRNA; the nascent peptide is terminated with the 'tag peptide' encoded by the tmRNA and targeted for degradation. The ribosome is freed to recommence translation, which seems to be the essential function of trans-translation. This chain is SsrA-binding protein, found in Sodalis glossinidius (strain morsitans).